A 131-amino-acid polypeptide reads, in one-letter code: Large ribosomal subunit protein bL17 (131 aa).

It belongs to the bacterial ribosomal protein bL17 family. In terms of assembly, part of the 50S ribosomal subunit. Contacts protein L32.

This chain is Large ribosomal subunit protein bL17, found in Oenococcus oeni (strain ATCC BAA-331 / PSU-1).